The chain runs to 62 residues: Protein YmcF (62 aa).

This sequence belongs to the YmcF/YnqF peptide family.

The chain is Protein YmcF from Escherichia coli (strain K12).